Consider the following 109-residue polypeptide: Class I hydrophobin 7 (109 aa).

Positions 1–17 (MFAQSFIITALAALAVA) are cleaved as a signal peptide. 4 cysteine pairs are disulfide-bonded: cysteine 28-cysteine 88, cysteine 35-cysteine 82, cysteine 36-cysteine 69, and cysteine 89-cysteine 102.

The protein belongs to the fungal hydrophobin family. In terms of assembly, self-assembles to form functional amyloid fibrils called rodlets. Self-assembly into fibrillar rodlets occurs spontaneously at hydrophobic:hydrophilic interfaces and the rodlets further associate laterally to form amphipathic monolayers.

Its subcellular location is the secreted. It localises to the cell wall. Its function is as follows. Aerial growth, conidiation, and dispersal of filamentous fungi in the environment rely upon a capability of their secreting small amphipathic proteins called hydrophobins (HPBs) with low sequence identity. Class I can self-assemble into an outermost layer of rodlet bundles on aerial cell surfaces, conferring cellular hydrophobicity that supports fungal growth, development and dispersal; whereas Class II form highly ordered films at water-air interfaces through intermolecular interactions but contribute nothing to the rodlet structure. Hydph7 is a class I hydrophobin involved in fruiting body development. The polypeptide is Class I hydrophobin 7 (Pleurotus ostreatus (strain PC15) (Oyster mushroom)).